The primary structure comprises 2122 residues: Unique GC organizer UGO (2122 aa).

The next 5 membrane-spanning stretches (helical) occupy residues 19–39, 50–70, 82–102, 115–135, and 145–165; these read FAVA…TNSL, LFGM…FVIV, TYIM…MQLI, VLTF…VLIG, and VVCS…DVGL. 13 disordered regions span residues 337–403, 422–532, 565–591, 627–762, 785–815, 848–870, 903–949, 999–1046, 1068–1308, 1328–1368, 1515–1540, 1560–1608, and 1639–1727; these read AALH…HRSA, FRGL…GPFV, DLRE…SGLQ, HRRG…GRAN, HAAS…CSAS, MSRR…RAER, SKEG…ASAN, RNET…LHSR, PSDL…HEAV, AGLS…SEEE, ANSS…AASA, AAEH…TPHT, and QGLG…TFFG. The span at 363–374 shows a compositional bias: polar residues; that stretch reads RSNTLRGCSGQV. Composition is skewed to basic and acidic residues over residues 503 to 525, 565 to 585, and 632 to 645; these read LRMD…DPAK, DLRE…HAAA, and GARD…RGEP. A compositionally biased stretch (basic residues) spans 672-687; sequence RLSRSRRHKTRTYRRG. The segment covering 690-699 has biased composition (low complexity); the sequence is SDGTTAGTSD. Over residues 707 to 720 the composition is skewed to acidic residues; it reads LEDEGSDSGQESES. Residues 725 to 735 are compositionally biased toward basic residues; sequence RRRMRSSRNRR. The segment covering 741–750 has biased composition (low complexity); it reads EDSSSGTSVR. Residues 751–760 are compositionally biased toward basic and acidic residues; sequence SEGRHCREGR. The N-linked (GlcNAc...) asparagine glycan is linked to asparagine 762. Residues 848 to 860 show a composition bias toward basic residues; sequence MSRRRRREGKSRP. Polar residues-rich tracts occupy residues 999 to 1011 and 1072 to 1097; these read RNET…SPAT and SLFT…SARI. A glycan (N-linked (GlcNAc...) asparagine) is linked at asparagine 1000. Residue asparagine 1165 is glycosylated (N-linked (GlcNAc...) asparagine). Basic and acidic residues predominate over residues 1220-1261; the sequence is SREDLVGEADSHVSPEKEVFVSSRREKREEQVPRSRREERRD. A compositionally biased stretch (basic residues) spans 1262–1276; sequence RRGRRWRRGRRRRKA. Composition is skewed to basic and acidic residues over residues 1277–1289 and 1345–1359; these read RECS…RDSS and GDMR…HSDG. Residues 1515–1527 are compositionally biased toward polar residues; that stretch reads ANSSTAVSSSLPD. Asparagine 1516 carries an N-linked (GlcNAc...) asparagine glycan. 2 stretches are compositionally biased toward low complexity: residues 1528–1540 and 1597–1608; these read STAW…AASA and TQTPQTPQTPHT. Residues 1684–1693 show a composition bias toward polar residues; that stretch reads LSATPSTRLQ. A run of 5 helical transmembrane segments spans residues 1859–1879, 1956–1976, 1989–2009, 2017–2037, and 2040–2060; these read VAWL…LLRL, MLAL…WHLI, IIPA…ILAV, IFLL…PPGV, and VQLF…GQLF. Residues 2102–2122 are disordered; it reads DEGSEDEVSMGSGHLVGDRSA.

Interacts with guanylate cyclase GC; the interaction regulates guanylate cyclase GC trafficking and catalytic activity.

The protein localises to the cell membrane. In terms of biological role, in tachyzoites, required for the cellular trafficking of guanylate cyclase GC to the cell membrane and for GC guanylate cyclase activity. The chain is Unique GC organizer UGO from Toxoplasma gondii (strain ATCC 50853 / GT1).